A 1770-amino-acid polypeptide reads, in one-letter code: MPRRRKNLGGNPFRKTANPKEVVVSSVASREEPTTTLPSMGETKVDQEELFTSISEIFSDLDPDVVYLMLSECDFKVENAMDCLLELSATDTKIEESSSQSFVASENQVGAAESKIMEKRPEEESEDSKMDSFLDMQLTEDLDSLIQNAFEKLNSSPDDQVYSFLPSQDVNSFNDSSEFINPDSSNMTPIFSTQNMNLNGENLENSGSTLSLNPLPSHSVLNESKCFIKDNTLALESNYPEDSLLSSSLNVASDSIAGCSSLNQKQKELLESECVEAQFSEAPVDLDASEPQACLNLPGLDLPGTGGDQKSTRVSDVFLPSEGFNFKPHKHPELPTKGKDVSYCPVLAPLPLLLPPPPPPPMWNPMIPAFDLFQGNHGFVAPVVTTAAHWRSVNYTFPPSVISHTSPTKVWRNKDGTSAYQVQETPVSQVVRKKTSYVGLVLVLLRGLPGSGKSFLARTLQEDNPSGVILSTDDYFYINGQYQFDVKYLGEAHEWNQNRAKEAFEKKISPIIIDNTNLQAWEMKPYVALSQKHKYKVLFREPDTWWKFKPKELARRNIHGVSKEKITRMLEHYQRFVSVPIIMSSSVPEKIERIELCAYSCEDRSTSPRDDEDIISEKEENILSLSLKHLEFTEEKNLDVTKETMLPENVAYLSNADLNKRRKEISDMNPSIQSALILETPHMYFSDSESKLQATDKSENEQIEMVAVKGYSKTDTDSSMERVSPSTCCSENNQEDCDLANSGPLQNEKSSPGEIVEERATVTKKAFGKQKSKSTLEKFPRHELSNFVGDWPVDKTIGQRTKRNRKTEKTSSVQSDKKYNYPQSHKLVNSVSVNTDCVQQRGSPHESVEDGRKSQCDDASEPLNSYKYDAYKNIDKNSFNIMGDWPSSDSLAQREHRSRMPKTGLSEPNLEIGTNDKMNEISLSTAHEACWGTSSQKLKTLGSSNLGSSEMLLSEMTCESQTCLSKKSHGQHTSLPLTFTNSAPTVSGVVEPQTLAECQEQMPKRDPGKEVGMCTQTEPQDFALLWKIEKNKISISDSIKVLTGRLDGFKPKVFNINTKSDVQEAIPYRVMYDKSTFVEESELTSADESENLNILCKLFGSFSLEALKDLYERCNKDIIWATSLLLDSETKLCEDTEFENFQKSCDGSQIGPFSLGLNLKEIISQRGTLENSNSPVPEFSHGIGISNADSQSTCDAERGNSEQAEMRAVTPENHESMTSIFPSAAVGLKNNNDILPNSQEELLYSSKQSFPGILKATTPKDMSETEKNLVVTETGDNIHSPSHFSDIFNFVSSTSNLELNEEIYFTDSLEIKRNENFPKDYVKFSDEEEFMNEDEKEMKEILMAGSSLSAGVSGEDKTEILNPTPAMAKSLTIDCLELALPPELAFQLNELFGPVGIDSGSLTVEDCVVHIDLNLAKVIHEKWKESVMERQRQEEVSCGKFMQDPSLVGHTGLDNPEQKSSQRTGKKLLKTLTASEMLPLLDHWNTQTKKVSLREIMSEEIALQEKHNLKRETLMFEKDCATKLKEKQLFKIFPAINQNFLVDIFKDHNYSLEHTVQFLNCVLEGDPVKTVVAQEFVHQNENVTSHTGQKSKEKKPKKLKETEETPSELSFQDFEYPDYDDYRAEAFLHQQKRMECYSKAKEAYRIGKKNVATFYAQQGTLHEQKMKEANHLAAIEIFEKVNASLLPQNVLDLHGLHVDEALEHLMRVLEKKTEEFKQNGGKPYLSVITGRGNHSQGGVARIKPAVIKYLISHSFRFSEIKPGCLKVMLK.

The segment at 1-40 is disordered; that stretch reads MPRRRKNLGGNPFRKTANPKEVVVSSVASREEPTTTLPSM. One can recognise a CUE domain in the interval 46–89; sequence DQEELFTSISEIFSDLDPDVVYLMLSECDFKVENAMDCLLELSA. Coiled-coil stretches lie at residues 90–177 and 218–259; these read TDTK…NDSS and HSVL…IAGC. A disordered region spans residues 95–129; the sequence is EESSSQSFVASENQVGAAESKIMEKRPEEESEDSK. A compositionally biased stretch (polar residues) spans 97 to 108; the sequence is SSSQSFVASENQ. Residues 115 to 129 are compositionally biased toward basic and acidic residues; sequence KIMEKRPEEESEDSK. An ATP-binding site is contributed by 447–454; that stretch reads GLPGSGKS. 4 disordered regions span residues 712–756, 795–822, 836–862, and 890–913; these read SKTD…GEIV, KTIG…YNYP, DCVQ…ASEP, and SLAQ…LEIG. Residues 843 to 856 are compositionally biased toward basic and acidic residues; it reads SPHESVEDGRKSQC. Ser906 carries the phosphoserine modification. Position 1210 is a phosphothreonine (Thr1210). Residues 1580–1606 form a disordered region; sequence NENVTSHTGQKSKEKKPKKLKETEETP. One can recognise a Smr domain in the interval 1691–1770; it reads LDLHGLHVDE…KPGCLKVMLK (80 aa).

Binds NEDD4. Binds BCL3 and CREBBP. Post-translationally, ubiquitinated; this targets the protein for degradation by the proteasome.

The protein localises to the cytoplasm. In terms of biological role, has 5'-polynucleotide kinase and nicking endonuclease activity. May play a role in DNA repair or recombination. This is NEDD4-binding protein 2 (N4BP2) from Homo sapiens (Human).